Here is a 144-residue protein sequence, read N- to C-terminus: Transcription antitermination protein NusB (144 aa).

This sequence belongs to the NusB family.

Involved in transcription antitermination. Required for transcription of ribosomal RNA (rRNA) genes. Binds specifically to the boxA antiterminator sequence of the ribosomal RNA (rrn) operons. The protein is Transcription antitermination protein NusB of Pasteurella multocida (strain Pm70).